The following is a 368-amino-acid chain: Ribulose bisphosphate carboxylase-like protein 1 (368 aa).

Belongs to the RuBisCO large chain family. Type IV subfamily.

Its function is as follows. Unknown. Probably does not have RuBisCO activity. This Rhodopseudomonas palustris (strain ATCC BAA-98 / CGA009) protein is Ribulose bisphosphate carboxylase-like protein 1 (rlp1).